The sequence spans 150 residues: Large ribosomal subunit protein bL9 (150 aa).

This sequence belongs to the bacterial ribosomal protein bL9 family.

Binds to the 23S rRNA. This chain is Large ribosomal subunit protein bL9, found in Shewanella oneidensis (strain ATCC 700550 / JCM 31522 / CIP 106686 / LMG 19005 / NCIMB 14063 / MR-1).